The chain runs to 321 residues: Mas-related G-protein coupled receptor member B4 (321 aa).

The Extracellular segment spans residues 1 to 33 (MGTTTLAWNINNTAENGSYTEMFSCITKFNTLN). N-linked (GlcNAc...) asparagine glycosylation is found at asparagine 11 and asparagine 16. The helical transmembrane segment at 34–54 (FLTVIIAVVGLAGNGIVLWLL) threads the bilayer. Over 55–62 (AFHLHRNA) the chain is Cytoplasmic. A helical membrane pass occupies residues 63–83 (FSVYVLNLAGADFLYLFTQVV). The Extracellular segment spans residues 84 to 97 (HSLECVLQLDNNSF). A glycan (N-linked (GlcNAc...) asparagine) is linked at asparagine 94. The chain crosses the membrane as a helical span at residues 98–118 (YILLIVTMFAYLAGLCMIAAI). The Cytoplasmic segment spans residues 119–146 (SAERCLSVMWPIWYHCQRPRHTSAIMCA). Residues 147-167 (LVWVSSLLLSLVVGLGCGFLF) form a helical membrane-spanning segment. At 168–172 (SYYDY) the chain is on the extracellular side. Residues 173–193 (YFCITLNFITAAFLIVLSVVL) traverse the membrane as a helical segment. The Cytoplasmic portion of the chain corresponds to 194 to 215 (SVSSLALLVKIVWGSHRIPVTR). A helical transmembrane segment spans residues 216-236 (FFVTIALTVVVFIYFGMPFGI). Over 237-257 (CWFLLSRIMEFDSIFFNNVYE) the chain is Extracellular. A helical transmembrane segment spans residues 258–278 (IIEFLSCVNSCANPIIYFLVG). Over 279–321 (SIRQHRLRWQSLKLLLQRAMQDTPEEESGERGPSQRSGELETV) the chain is Cytoplasmic. Residues 299–321 (QDTPEEESGERGPSQRSGELETV) form a disordered region.

This sequence belongs to the G-protein coupled receptor 1 family. Mas subfamily.

Its subcellular location is the membrane. Its function is as follows. Orphan receptor. Probably involved in the function of nociceptive neurons. May regulate nociceptor function and/or development, including the sensation or modulation of pain. The sequence is that of Mas-related G-protein coupled receptor member B4 (Mrgprb4) from Mus musculus (Mouse).